The chain runs to 361 residues: Diacylglycerol O-acyltransferase 2 (361 aa).

At 1 to 42 (MKTIIAAYSGVLRGTGSSLLSAVHDLPSIPWLSKSSVVRHLQ) the chain is on the cytoplasmic side. The helical transmembrane segment at 43 to 61 (IISVLQWVLSFLILGVACT) threads the bilayer. The Lumenal segment spans residues 62–65 (AVLV). The chain crosses the membrane as a helical span at residues 66-85 (YIFCTDLWLIAALYFTWMVL). The Cytoplasmic portion of the chain corresponds to 86–361 (DWNTPYKGGR…LPDSETLEFI (276 aa)).

The protein belongs to the diacylglycerol acyltransferase family.

It localises to the endoplasmic reticulum membrane. The protein localises to the lipid droplet. The protein resides in the cytoplasm. It is found in the perinuclear region. It carries out the reaction an acyl-CoA + a 1,2-diacyl-sn-glycerol = a triacyl-sn-glycerol + CoA. The enzyme catalyses all-trans-retinol + an acyl-CoA = an all-trans-retinyl ester + CoA. The catalysed reaction is 2-(9Z-octadecenoyl)-glycerol + (9Z)-octadecenoyl-CoA = 1,2-di-(9Z-octadecenoyl)-sn-glycerol + CoA. It catalyses the reaction 1,2-di-(9Z-octadecenoyl)-sn-glycerol + (9Z)-octadecenoyl-CoA = 1,2,3-tri-(9Z-octadecenoyl)-glycerol + CoA. It carries out the reaction all-trans-retinol + hexadecanoyl-CoA = all-trans-retinyl hexadecanoate + CoA. The enzyme catalyses 1-O-(9Z-octadecenyl)-glycerol + (9Z)-octadecenoyl-CoA = 1-O-(9Z-octadecyl)-3-(9Z-octadecenoyl)-glycerol + CoA. The catalysed reaction is 1-(9Z-octadecenoyl)-glycerol + (9Z)-octadecenoyl-CoA = 1,2-di-(9Z-octadecenoyl)-glycerol + CoA. It catalyses the reaction 1,2-di-(9Z-octadecenoyl)-sn-glycerol + hexadecanoyl-CoA = 1,2-di-(9Z)-octadecenoyl-3-hexadecanoyl-sn-glycerol + CoA. It carries out the reaction 1,3-di-(9Z-octadecenoyl)-glycerol + (9Z)-octadecenoyl-CoA = 1,2,3-tri-(9Z-octadecenoyl)-glycerol + CoA. The enzyme catalyses 2,3-di-(9Z)-octadecenoyl-sn-glycerol + (9Z)-octadecenoyl-CoA = 1,2,3-tri-(9Z-octadecenoyl)-glycerol + CoA. The catalysed reaction is 2-(9Z-octadecenoyl)-glycerol + hexadecanoyl-CoA = 1-hexadecanoyl-2-(9Z-octadecenoyl)-sn-glycerol + CoA. It participates in glycerolipid metabolism; triacylglycerol biosynthesis. In terms of biological role, essential acyltransferase that catalyzes the terminal and only committed step in triacylglycerol synthesis by using diacylglycerol and fatty acyl CoA as substrates. Required for synthesis and storage of intracellular triglycerides. Probably plays a central role in cytosolic lipid accumulation. The polypeptide is Diacylglycerol O-acyltransferase 2 (dgat2) (Xenopus laevis (African clawed frog)).